A 300-amino-acid chain; its full sequence is Glycine--tRNA ligase alpha subunit (300 aa).

Belongs to the class-II aminoacyl-tRNA synthetase family. In terms of assembly, tetramer of two alpha and two beta subunits.

The protein localises to the cytoplasm. It carries out the reaction tRNA(Gly) + glycine + ATP = glycyl-tRNA(Gly) + AMP + diphosphate. This chain is Glycine--tRNA ligase alpha subunit, found in Prochlorococcus marinus (strain MIT 9313).